Reading from the N-terminus, the 274-residue chain is 3-methyl-2-oxobutanoate hydroxymethyltransferase (274 aa).

D44 and D83 together coordinate Mg(2+). Residues 44–45 (DS), D83, and K113 contribute to the 3-methyl-2-oxobutanoate site. Mg(2+) is bound at residue E115. The active-site Proton acceptor is the E182.

This sequence belongs to the PanB family. Homodecamer; pentamer of dimers. Requires Mg(2+) as cofactor.

The protein resides in the cytoplasm. The enzyme catalyses 3-methyl-2-oxobutanoate + (6R)-5,10-methylene-5,6,7,8-tetrahydrofolate + H2O = 2-dehydropantoate + (6S)-5,6,7,8-tetrahydrofolate. The protein operates within cofactor biosynthesis; (R)-pantothenate biosynthesis; (R)-pantoate from 3-methyl-2-oxobutanoate: step 1/2. Its function is as follows. Catalyzes the reversible reaction in which hydroxymethyl group from 5,10-methylenetetrahydrofolate is transferred onto alpha-ketoisovalerate to form ketopantoate. The sequence is that of 3-methyl-2-oxobutanoate hydroxymethyltransferase from Campylobacter jejuni subsp. doylei (strain ATCC BAA-1458 / RM4099 / 269.97).